The sequence spans 116 residues: Hydrogenase maturation factor HypA (116 aa).

Ni(2+) is bound at residue His-2. Residues Cys-73, Cys-76, Cys-90, and Cys-93 each contribute to the Zn(2+) site.

This sequence belongs to the HypA/HybF family.

Functionally, involved in the maturation of [NiFe] hydrogenases. Required for nickel insertion into the metal center of the hydrogenase. The sequence is that of Hydrogenase maturation factor HypA from Escherichia coli O157:H7.